The primary structure comprises 1496 residues: Chromosome partition protein MukB (1496 aa).

Residue 63–70 (GGNGAGKS) participates in ATP binding. Coiled-coil stretches lie at residues 328 to 493 (KLEL…QRLS), 536 to 632 (KMQA…APAW), 808 to 832 (RAAR…HAER), 861 to 1171 (NPEE…SAEE), and 1235 to 1291 (IDAI…LQNI). The interval 694-811 (PDGSDDVRLN…EVPLFGRAAR (118 aa)) is flexible hinge. Residues 1082 to 1091 (RARSRRDELQ) show a composition bias toward basic and acidic residues. The tract at residues 1082–1101 (RARSRRDELQQRLSQQRSRK) is disordered.

This sequence belongs to the SMC family. MukB subfamily. Homodimerization via its hinge domain. Binds to DNA via its C-terminal region. Interacts, and probably forms a ternary complex, with MukE and MukF via its C-terminal region. The complex formation is stimulated by calcium or magnesium. Interacts with tubulin-related protein FtsZ.

Its subcellular location is the cytoplasm. The protein localises to the nucleoid. Its function is as follows. Plays a central role in chromosome condensation, segregation and cell cycle progression. Functions as a homodimer, which is essential for chromosome partition. Involved in negative DNA supercoiling in vivo, and by this means organize and compact chromosomes. May achieve or facilitate chromosome segregation by condensation DNA from both sides of a centrally located replisome during cell division. The polypeptide is Chromosome partition protein MukB (Actinobacillus pleuropneumoniae serotype 5b (strain L20)).